The sequence spans 120 residues: UPF0295 protein Aflv_0370 (120 aa).

Transmembrane regions (helical) follow at residues 12–32 and 42–62; these read IRTFALSLIFIGFFVMYGGIF and LFMILGLLFIIASTVVYFWIG.

Belongs to the UPF0295 family.

It localises to the cell membrane. This Anoxybacillus flavithermus (strain DSM 21510 / WK1) protein is UPF0295 protein Aflv_0370.